The sequence spans 809 residues: Acyl-homoserine lactone acylase QuiP (809 aa).

The N-terminal stretch at 1 to 26 (MASPAFSHFLPRFGVAAAVASALSLA) is a signal peptide. The active-site Nucleophile is the serine 261.

This sequence belongs to the peptidase S45 family. In terms of assembly, heterodimer of an alpha subunit and a beta subunit processed from the same precursor.

The protein localises to the periplasm. It carries out the reaction an N-acyl-L-homoserine lactone + H2O = L-homoserine lactone + a carboxylate. Its function is as follows. Catalyzes the deacylation of acyl-homoserine lactone (AHL or acyl-HSL), releasing homoserine lactone (HSL) and the corresponding fatty acid. Possesses a specificity for the degradation of long-chain acyl-HSLs (side chains of seven or more carbons in length). In Pseudomonas fluorescens (strain ATCC BAA-477 / NRRL B-23932 / Pf-5), this protein is Acyl-homoserine lactone acylase QuiP (quiP).